Reading from the N-terminus, the 2496-residue chain is Non-reducing polyketide synthase adrD (2496 aa).

An N-terminal acylcarrier protein transacylase domain (SAT) region spans residues 15 to 254; sequence LVFGPQIAEI…HHASHITAVQ (240 aa). Residues 387 to 808 enclose the Ketosynthase family 3 (KS3) domain; sequence ATPIAITGMG…GSNAALVVKQ (422 aa). Catalysis depends on for beta-ketoacyl synthase activity residues Cys-552, His-687, and His-726. Residues 914-1223 form a malonyl-CoA:ACP transacylase (MAT) domain region; it reads LCFGGQNGNE…QSLDLGGPQG (310 aa). Ser-1001 (for acyl/malonyl transferase activity) is an active-site residue. The interval 1295 to 1423 is N-terminal hotdog fold; the sequence is KEFVQLLTKQ…GEISLHPFGQ (129 aa). The region spanning 1295 to 1602 is the PKS/mFAS DH domain; it reads KEFVQLLTKQ…FTSVSIAGLA (308 aa). The product template (PT) domain stretch occupies residues 1296–1601; sequence EFVQLLTKQP…EFTSVSIAGL (306 aa). The active-site Proton acceptor; for dehydratase activity is His-1326. The tract at residues 1451-1602 is C-terminal hotdog fold; the sequence is ESSGLKGFAV…FTSVSIAGLA (152 aa). Asp-1509 (proton donor; for dehydratase activity) is an active-site residue. Over residues 1615–1629 the composition is skewed to basic and acidic residues; the sequence is EKASPDLSLRNDSKV. The tract at residues 1615 to 1645 is disordered; sequence EKASPDLSLRNDSKVDVNPTPQNTAPVVQPT. The segment covering 1633–1645 has biased composition (polar residues); that stretch reads PTPQNTAPVVQPT. The 75-residue stretch at 1652 to 1726 folds into the Carrier domain; sequence PGYFVVVQEM…ALVQTIFPDA (75 aa). Ser-1686 carries the post-translational modification O-(pantetheine 4'-phosphoryl)serine. Residues 1888 to 2121 are methyltransferase (CMeT) domain; the sequence is QHRSEHHLLK…GFQWVDWTHN (234 aa). Residues 2151-2496 form a thioesterase (TE) domain region; it reads RVMNEETVPY…YEFLRDHVRY (346 aa). Active-site for thioesterase activity residues include Ser-2274 and Asp-2433.

It carries out the reaction 3 malonyl-CoA + acetyl-CoA + 2 S-adenosyl-L-methionine = 3,5-dimethylorsellinate + 2 S-adenosyl-L-homocysteine + 3 CO2 + 4 CoA. The protein operates within secondary metabolite biosynthesis; terpenoid biosynthesis. In terms of biological role, non-reducing polyketide synthase; part of the gene cluster that mediates the biosynthesis of andrastins, meroterpenoid compounds that exhibit inhibitory activity against ras farnesyltransferase, suggesting that they could be promising leads for antitumor agents. The first step of the pathway is the synthesis of 3,5-dimethylorsellinic acid (DMOA) by the polyketide synthase adrD via condensation of one acetyl-CoA starter unit with 3 malonyl-CoA units and 2 methylations. DMAO is then converted to farnesyl-DMAO by the prenyltransferase adrG. The methyltransferase adrK catalyzes the methylation of the carboxyl group of farnesyl-DMAO to farnesyl-DMAO methyl ester which is further converted to epoxyfarnesyl-DMAO methyl ester by the FAD-dependent monooxygenase adrH. The terpene cyclase adrI then catalyzes the carbon skeletal rearrangement to generate the andrastin E, the first compound in the pathway having the andrastin scaffold, with the tetracyclic ring system. The post-cyclization tailoring enzymes adrF, adrE, adrJ, and adrA, are involved in the conversion of andrastin E into andrastin A. The short chain dehydrogenase adrF is responsible for the oxidation of the C-3 a hydroxyl group of andrastin E to yield the corresponding ketone, andrastin D. The ketoreductase adrE stereoselectively reduces the carbonyl moiety to reverse the stereochemistry of the C-3 position to yield andrastin F. The acetyltransferase adrJ is the acetyltransferase that attaches the acetyl group to the C-3 hydroxyl group of andrastin F to yield andrastin C. Finally, the cytochrome P450 monooxygenase adrA catalyzes two sequential oxidation reactions of the C-23 methyl group, to generate the corresponding alcohol andrastin B, and aldehyde andrastin A. The sequence is that of Non-reducing polyketide synthase adrD from Penicillium rubens (strain ATCC 28089 / DSM 1075 / NRRL 1951 / Wisconsin 54-1255) (Penicillium chrysogenum).